We begin with the raw amino-acid sequence, 339 residues long: Undecaprenyl-phosphate 4-deoxy-4-formamido-L-arabinose transferase (339 aa).

The next 2 membrane-spanning stretches (helical) occupy residues 235–255 (LSLV…FLLV) and 269–289 (LFVL…GMGL).

Belongs to the glycosyltransferase 2 family.

It is found in the cell inner membrane. It catalyses the reaction UDP-4-deoxy-4-formamido-beta-L-arabinose + di-trans,octa-cis-undecaprenyl phosphate = 4-deoxy-4-formamido-alpha-L-arabinopyranosyl di-trans,octa-cis-undecaprenyl phosphate + UDP. The protein operates within glycolipid biosynthesis; 4-amino-4-deoxy-alpha-L-arabinose undecaprenyl phosphate biosynthesis; 4-amino-4-deoxy-alpha-L-arabinose undecaprenyl phosphate from UDP-4-deoxy-4-formamido-beta-L-arabinose and undecaprenyl phosphate: step 1/2. It functions in the pathway bacterial outer membrane biogenesis; lipopolysaccharide biosynthesis. Functionally, catalyzes the transfer of 4-deoxy-4-formamido-L-arabinose from UDP to undecaprenyl phosphate. The modified arabinose is attached to lipid A and is required for resistance to polymyxin and cationic antimicrobial peptides. The sequence is that of Undecaprenyl-phosphate 4-deoxy-4-formamido-L-arabinose transferase from Pseudomonas paraeruginosa (strain DSM 24068 / PA7) (Pseudomonas aeruginosa (strain PA7)).